Consider the following 91-residue polypeptide: Small ribosomal subunit protein uS19 (91 aa).

Residues 72-91 are disordered; it reads GEFSPTRTYTGHGSEKGKKK.

The protein belongs to the universal ribosomal protein uS19 family.

Functionally, protein S19 forms a complex with S13 that binds strongly to the 16S ribosomal RNA. This is Small ribosomal subunit protein uS19 from Mycoplasma mobile (strain ATCC 43663 / 163K / NCTC 11711) (Mesomycoplasma mobile).